The sequence spans 231 residues: Uracil-DNA glycosylase (231 aa).

The Proton acceptor role is filled by aspartate 74.

The protein belongs to the uracil-DNA glycosylase (UDG) superfamily. UNG family.

The protein resides in the cytoplasm. It catalyses the reaction Hydrolyzes single-stranded DNA or mismatched double-stranded DNA and polynucleotides, releasing free uracil.. Its function is as follows. Excises uracil residues from the DNA which can arise as a result of misincorporation of dUMP residues by DNA polymerase or due to deamination of cytosine. The polypeptide is Uracil-DNA glycosylase (Campylobacter jejuni subsp. jejuni serotype O:6 (strain 81116 / NCTC 11828)).